The sequence spans 166 residues: Phospholipase A2 inhibitor (166 aa).

The signal sequence occupies residues 1-19 (MRLILLSGLLLLGIFLANG). Residues 46–161 (LRGAFLTVYK…CDDNLLVVCE (116 aa)) enclose the C-type lectin domain. N61 and N122 each carry an N-linked (GlcNAc...) asparagine glycan. Cystine bridges form between C83–C160 and C138–C152.

The protein belongs to the alpha-type phospholipase A2 inhibitor family. As to quaternary structure, homotrimer; non-covalently linked. In terms of tissue distribution, expressed by the liver.

The protein resides in the secreted. This phospholipase A2 inhibitor binds directly phospholipase A2 in the presence or absence of calcium. This is Phospholipase A2 inhibitor from Bothrops alternatus (Urutu).